Here is a 413-residue protein sequence, read N- to C-terminus: ATP-dependent RNA helicase RhlB (413 aa).

The Q motif motif lies at 9-37; the sequence is QRFADLPLHPQILAALNDQNFEYCTPIQA. The region spanning 40–217 is the Helicase ATP-binding domain; it reads LPLTLQGKDV…FEDMNDPEYI (178 aa). Residue 53–60 coordinates ATP; it reads AQTGTGKT. The short motif at 163-166 is the DEAD box element; that stretch reads DEAD. The Helicase C-terminal domain maps to 241–388; it reads KMALLMTLLE…VSQYDPDSLI (148 aa).

This sequence belongs to the DEAD box helicase family. RhlB subfamily. As to quaternary structure, component of the RNA degradosome, which is a multiprotein complex involved in RNA processing and mRNA degradation.

The protein resides in the cytoplasm. It carries out the reaction ATP + H2O = ADP + phosphate + H(+). In terms of biological role, DEAD-box RNA helicase involved in RNA degradation. Has RNA-dependent ATPase activity and unwinds double-stranded RNA. The protein is ATP-dependent RNA helicase RhlB of Actinobacillus succinogenes (strain ATCC 55618 / DSM 22257 / CCUG 43843 / 130Z).